Here is a 170-residue protein sequence, read N- to C-terminus: MPTKSIKIMVEGGNVKPGPPLAPTLSQLGLNVGEVVKKLNEATSSFKGMSVPVTIEVDSNTKKYEIKVGIPTTTALLLKEAGASEPSGDPAHKKIGNLSLEQVIKIVIMKKPGLTTKSLKAAVKSMLGTAKSIGVTVENKDPKELVKEVEEGKYDDLLAKYENEWNEVKE.

It belongs to the universal ribosomal protein uL11 family. In terms of assembly, part of the ribosomal stalk of the 50S ribosomal subunit. Interacts with L10 and the large rRNA to form the base of the stalk. L10 forms an elongated spine to which L12 dimers bind in a sequential fashion forming a multimeric L10(L12)X complex.

In terms of biological role, forms part of the ribosomal stalk which helps the ribosome interact with GTP-bound translation factors. The chain is Large ribosomal subunit protein uL11 from Saccharolobus islandicus (strain Y.N.15.51 / Yellowstone #2) (Sulfolobus islandicus).